We begin with the raw amino-acid sequence, 120 residues long: NAD(P)H-quinone oxidoreductase subunit 3, chloroplastic (120 aa).

The next 3 membrane-spanning stretches (helical) occupy residues 9-29, 64-84, and 88-108; these read IFWA…FISG, MFAL…PWAM, and VLGL…IVGL.

This sequence belongs to the complex I subunit 3 family. In terms of assembly, NDH is composed of at least 16 different subunits, 5 of which are encoded in the nucleus.

The protein localises to the plastid. It is found in the chloroplast thylakoid membrane. It catalyses the reaction a plastoquinone + NADH + (n+1) H(+)(in) = a plastoquinol + NAD(+) + n H(+)(out). The enzyme catalyses a plastoquinone + NADPH + (n+1) H(+)(in) = a plastoquinol + NADP(+) + n H(+)(out). Functionally, NDH shuttles electrons from NAD(P)H:plastoquinone, via FMN and iron-sulfur (Fe-S) centers, to quinones in the photosynthetic chain and possibly in a chloroplast respiratory chain. The immediate electron acceptor for the enzyme in this species is believed to be plastoquinone. Couples the redox reaction to proton translocation, and thus conserves the redox energy in a proton gradient. This Jasminum nudiflorum (Winter jasmine) protein is NAD(P)H-quinone oxidoreductase subunit 3, chloroplastic.